A 394-amino-acid chain; its full sequence is Ribulose bisphosphate carboxylase large chain (394 aa).

Lysine 5 bears the N6,N6,N6-trimethyllysine mark. The substrate site is built by asparagine 114 and threonine 164. Lysine 166 serves as the catalytic Proton acceptor. Position 168 (lysine 168) interacts with substrate. 3 residues coordinate Mg(2+): lysine 192, aspartate 194, and glutamate 195. Lysine 192 carries the N6-carboxylysine modification. The Proton acceptor role is filled by histidine 285. Positions 286, 318, and 370 each coordinate substrate.

It belongs to the RuBisCO large chain family. Type I subfamily. In terms of assembly, heterohexadecamer of 8 large chains and 8 small chains; disulfide-linked. The disulfide link is formed within the large subunit homodimers. Requires Mg(2+) as cofactor. In terms of processing, the disulfide bond which can form in the large chain dimeric partners within the hexadecamer appears to be associated with oxidative stress and protein turnover.

It is found in the plastid. It localises to the chloroplast. The catalysed reaction is 2 (2R)-3-phosphoglycerate + 2 H(+) = D-ribulose 1,5-bisphosphate + CO2 + H2O. It carries out the reaction D-ribulose 1,5-bisphosphate + O2 = 2-phosphoglycolate + (2R)-3-phosphoglycerate + 2 H(+). RuBisCO catalyzes two reactions: the carboxylation of D-ribulose 1,5-bisphosphate, the primary event in carbon dioxide fixation, as well as the oxidative fragmentation of the pentose substrate in the photorespiration process. Both reactions occur simultaneously and in competition at the same active site. This is Ribulose bisphosphate carboxylase large chain (rbcL) from Nelumbo lutea (American lotus).